A 422-amino-acid chain; its full sequence is Histidine--tRNA ligase (422 aa).

This sequence belongs to the class-II aminoacyl-tRNA synthetase family. As to quaternary structure, homodimer.

The protein resides in the cytoplasm. It catalyses the reaction tRNA(His) + L-histidine + ATP = L-histidyl-tRNA(His) + AMP + diphosphate + H(+). This is Histidine--tRNA ligase from Vibrio cholerae serotype O1 (strain ATCC 39541 / Classical Ogawa 395 / O395).